The sequence spans 296 residues: Phosphoribosylaminoimidazole-succinocarboxamide synthase (296 aa).

This sequence belongs to the SAICAR synthetase family.

It carries out the reaction 5-amino-1-(5-phospho-D-ribosyl)imidazole-4-carboxylate + L-aspartate + ATP = (2S)-2-[5-amino-1-(5-phospho-beta-D-ribosyl)imidazole-4-carboxamido]succinate + ADP + phosphate + 2 H(+). It participates in purine metabolism; IMP biosynthesis via de novo pathway; 5-amino-1-(5-phospho-D-ribosyl)imidazole-4-carboxamide from 5-amino-1-(5-phospho-D-ribosyl)imidazole-4-carboxylate: step 1/2. The sequence is that of Phosphoribosylaminoimidazole-succinocarboxamide synthase from Geobacter metallireducens (strain ATCC 53774 / DSM 7210 / GS-15).